We begin with the raw amino-acid sequence, 332 residues long: Arrestin domain-containing protein 5 (332 aa).

The segment at 311–332 (SNQTAAGCRTRAPLPVSPDQQN) is disordered.

Belongs to the arrestin family.

The protein resides in the membrane. In terms of biological role, plays an essential role in spermatogenesis. May be involved in the anchoring of the sperm head to the tail during spermatogenesis by affecting SEC22A-mediated SUN5 and NDC1 transport and localization. The protein is Arrestin domain-containing protein 5 (ARRDC5) of Bos taurus (Bovine).